The following is a 165-amino-acid chain: UPF0114 protein in repA1-repA2 intergenic region (165 aa).

3 helical membrane passes run Tyr10–Leu32, Leu53–Phe75, and Ile136–Cys155.

The protein belongs to the UPF0114 family.

The protein localises to the cell membrane. The sequence is that of UPF0114 protein in repA1-repA2 intergenic region from Buchnera aphidicola subsp. Geoica urticularia.